The following is a 500-amino-acid chain: Probable cytosol aminopeptidase (500 aa).

2 residues coordinate Mn(2+): Lys-268 and Asp-273. Lys-280 is an active-site residue. Mn(2+) contacts are provided by Asp-291, Asp-350, and Glu-352. Residue Arg-354 is part of the active site.

Belongs to the peptidase M17 family. Requires Mn(2+) as cofactor.

The protein resides in the cytoplasm. The enzyme catalyses Release of an N-terminal amino acid, Xaa-|-Yaa-, in which Xaa is preferably Leu, but may be other amino acids including Pro although not Arg or Lys, and Yaa may be Pro. Amino acid amides and methyl esters are also readily hydrolyzed, but rates on arylamides are exceedingly low.. It catalyses the reaction Release of an N-terminal amino acid, preferentially leucine, but not glutamic or aspartic acids.. Functionally, presumably involved in the processing and regular turnover of intracellular proteins. Catalyzes the removal of unsubstituted N-terminal amino acids from various peptides. The polypeptide is Probable cytosol aminopeptidase (Baumannia cicadellinicola subsp. Homalodisca coagulata).